The primary structure comprises 744 residues: Adenosylcobalamin-dependent ribonucleoside-triphosphate reductase (744 aa).

A disulfide bridge connects residues Cys120 and Cys424. Residues 148–159 (SMPFSFLFDQLM) are effector region-1. The segment at 169 to 318 (VDDNINQIPQ…ICNLIGKTVV (150 aa)) is effector region-2. Active-site residues include Cys413 and Glu415. The adenosylcobalamin-binding-1 stretch occupies residues 570–631 (FHYAGYLIQR…SKNFASAGTV (62 aa)). Residues 690–729 (LKQAPKEPINKKAYEDRVAMITGDVKEVFENQNKDQKGLE) form an adenosylcobalamin-binding-2 region.

The protein belongs to the class II ribonucleoside-triphosphate reductase family. As to quaternary structure, monomer. Requires adenosylcob(III)alamin as cofactor.

It catalyses the reaction a 2'-deoxyribonucleoside 5'-triphosphate + [thioredoxin]-disulfide + H2O = a ribonucleoside 5'-triphosphate + [thioredoxin]-dithiol. Allosterically regulated by ATP and dNTP. The chain is Adenosylcobalamin-dependent ribonucleoside-triphosphate reductase (rtpR) from Lactobacillus helveticus (strain DPC 4571).